The sequence spans 594 residues: Probable methylenetetrahydrofolate reductase (NADH) (594 aa).

The active-site Proton donor/acceptor is E21. NAD(+) contacts are provided by residues 21-26 (EYFPPK) and 52-53 (TW). Residues 52-53 (TW), H81, 111-113 (RGD), Y153, 157-160 (HPDA), D175, and K182 each bind FAD. Position 113 (D113) interacts with substrate. The substrate site is built by Q193 and Y285.

The protein belongs to the methylenetetrahydrofolate reductase family. As to quaternary structure, homodimer. Requires FAD as cofactor.

The catalysed reaction is (6S)-5-methyl-5,6,7,8-tetrahydrofolate + NAD(+) = (6R)-5,10-methylene-5,6,7,8-tetrahydrofolate + NADH + H(+). It functions in the pathway one-carbon metabolism; tetrahydrofolate interconversion. With respect to regulation, plant MTHFRs strongly prefer NADH over NADPH. Not inhibited by methionine or S-adenosylmethionine. Functionally, the probable reversibility of the MTHFR reaction in plants suggests that they can metabolize the methyl group of 5,10-methylenetetrahydrofolate to serine, sugars and starch. This Oryza sativa subsp. japonica (Rice) protein is Probable methylenetetrahydrofolate reductase (NADH).